We begin with the raw amino-acid sequence, 126 residues long: Large ribosomal subunit protein bL19 (126 aa).

This sequence belongs to the bacterial ribosomal protein bL19 family.

In terms of biological role, this protein is located at the 30S-50S ribosomal subunit interface and may play a role in the structure and function of the aminoacyl-tRNA binding site. The protein is Large ribosomal subunit protein bL19 of Thiobacillus denitrificans (strain ATCC 25259 / T1).